The primary structure comprises 237 residues: Deoxyribose-phosphate aldolase (237 aa).

Asp94 functions as the Proton donor/acceptor in the catalytic mechanism. Catalysis depends on Lys158, which acts as the Schiff-base intermediate with acetaldehyde. Lys187 serves as the catalytic Proton donor/acceptor.

It belongs to the DeoC/FbaB aldolase family. DeoC type 1 subfamily.

Its subcellular location is the cytoplasm. The enzyme catalyses 2-deoxy-D-ribose 5-phosphate = D-glyceraldehyde 3-phosphate + acetaldehyde. It participates in carbohydrate degradation; 2-deoxy-D-ribose 1-phosphate degradation; D-glyceraldehyde 3-phosphate and acetaldehyde from 2-deoxy-alpha-D-ribose 1-phosphate: step 2/2. Its function is as follows. Catalyzes a reversible aldol reaction between acetaldehyde and D-glyceraldehyde 3-phosphate to generate 2-deoxy-D-ribose 5-phosphate. This is Deoxyribose-phosphate aldolase from Lactobacillus acidophilus (strain ATCC 700396 / NCK56 / N2 / NCFM).